A 268-amino-acid chain; its full sequence is uncharacterized protein (268 aa).

This is an uncharacterized protein from Schizosaccharomyces pombe (strain 972 / ATCC 24843) (Fission yeast).